The primary structure comprises 241 residues: Methylthioribulose-1-phosphate dehydratase (241 aa).

The segment at 1 to 20 (MSAIKDERNNDHLVQSHDPE) is disordered. Cysteine 100 provides a ligand contact to substrate. 2 residues coordinate Zn(2+): histidine 117 and histidine 119. The Proton donor/acceptor role is filled by glutamate 146. Residue histidine 202 participates in Zn(2+) binding.

It belongs to the aldolase class II family. MtnB subfamily. Zn(2+) is required as a cofactor.

The protein localises to the cytoplasm. The catalysed reaction is 5-(methylsulfanyl)-D-ribulose 1-phosphate = 5-methylsulfanyl-2,3-dioxopentyl phosphate + H2O. The protein operates within amino-acid biosynthesis; L-methionine biosynthesis via salvage pathway; L-methionine from S-methyl-5-thio-alpha-D-ribose 1-phosphate: step 2/6. In terms of biological role, catalyzes the dehydration of methylthioribulose-1-phosphate (MTRu-1-P) into 2,3-diketo-5-methylthiopentyl-1-phosphate (DK-MTP-1-P). In Blastomyces gilchristii (strain SLH14081) (Blastomyces dermatitidis), this protein is Methylthioribulose-1-phosphate dehydratase.